A 105-amino-acid polypeptide reads, in one-letter code: MLTTTQDKFEDFEIEKTIGLVRGNTIRTKNIGYDLVASLRTIVGGEIPEYTKMMNESREEAFKRMIQEAQMLGADAVVGLRFGTSSVLPGSAEFLCYGTAVTLKK.

It belongs to the UPF0145 family.

The polypeptide is UPF0145 protein Mevan_1624 (Methanococcus vannielii (strain ATCC 35089 / DSM 1224 / JCM 13029 / OCM 148 / SB)).